Here is a 342-residue protein sequence, read N- to C-terminus: uncharacterized protein (342 aa).

The protein belongs to the cycloisomerase 2 family.

This is an uncharacterized protein from Staphylococcus aureus (strain NCTC 8325 / PS 47).